A 121-amino-acid chain; its full sequence is Putative iron-sulfur cluster insertion protein ErpA (121 aa).

Residues C49, C113, and C115 each coordinate iron-sulfur cluster.

The protein belongs to the HesB/IscA family. In terms of assembly, homodimer. Requires iron-sulfur cluster as cofactor.

In terms of biological role, required for insertion of 4Fe-4S clusters. This Polaromonas sp. (strain JS666 / ATCC BAA-500) protein is Putative iron-sulfur cluster insertion protein ErpA.